The primary structure comprises 556 residues: 2,3-bisphosphoglycerate-independent phosphoglycerate mutase (556 aa).

Mn(2+) is bound by residues aspartate 25 and serine 78. Serine 78 (phosphoserine intermediate) is an active-site residue. Substrate is bound by residues histidine 137, 167–168 (RD), arginine 203, arginine 210, 283–286 (RADR), and lysine 358. Residues aspartate 427, histidine 431, aspartate 468, histidine 469, and histidine 498 each contribute to the Mn(2+) site.

This sequence belongs to the BPG-independent phosphoglycerate mutase family. Monomer. It depends on Mn(2+) as a cofactor. Found ubiquitously in germinating seed.

The protein localises to the cytoplasm. The enzyme catalyses (2R)-2-phosphoglycerate = (2R)-3-phosphoglycerate. The protein operates within carbohydrate degradation; glycolysis; pyruvate from D-glyceraldehyde 3-phosphate: step 3/5. Catalyzes the interconversion of 2-phosphoglycerate and 3-phosphoglycerate. The protein is 2,3-bisphosphoglycerate-independent phosphoglycerate mutase of Ricinus communis (Castor bean).